The chain runs to 474 residues: P2X purinoceptor 2 (474 aa).

Residues 1 to 42 lie on the Cytoplasmic side of the membrane; that stretch reads MAATHPKAPTAQRLRQGWSAFWDYETPKVIVVRNRPLGVVYR. A helical membrane pass occupies residues 43-60; the sequence is AVQLLILLYFVWYVFIVQ. Over 61 to 333 the chain is Extracellular; it reads KSYQDSETGP…IVHGQAGKFS (273 aa). 2 residues coordinate ATP: Lys-77 and Lys-79. Disulfide bonds link Cys-121-Cys-172, Cys-132-Cys-155, and Cys-138-Cys-166. An N-linked (GlcNAc...) asparagine glycan is attached at Asn-129. An N-linked (GlcNAc...) asparagine glycan is attached at Asn-190. An ATP-binding site is contributed by Thr-192. Cys-222 and Cys-232 are oxidised to a cystine. An N-linked (GlcNAc...) asparagine glycan is attached at Asn-247. Cys-266 and Cys-275 are joined by a disulfide. The ATP site is built by Ser-292, Asn-296, and Arg-298. Asn-306 carries N-linked (GlcNAc...) asparagine glycosylation. Lys-315 lines the ATP pocket. Positions 316 to 329 are pore-forming motif; that stretch reads AYGIRIDVIVHGQA. Residues 334 to 354 traverse the membrane as a helical segment; sequence LIPTIINLATALTSIGVGSFL. Over 355 to 474 the chain is Cytoplasmic; the sequence is CDWILLTFMN…PTDPKGLAQL (120 aa). Residues 445–474 are disordered; sequence PDRCVGQGLPSSESPLQDSTPTDPKGLAQL. A compositionally biased stretch (polar residues) spans 453-466; sequence LPSSESPLQDSTPT.

It belongs to the P2X receptor family. As to quaternary structure, homotrimer and heterotrimer; functional P2XRs are organized as homomeric and heteromeric trimers. Homotrimer. Forms heterodimer with P2RX1. Forms heterotrimer with P2RX6. Forms heterotrimer with P2RX3. Express in organ of Corti.

Its subcellular location is the cell membrane. The catalysed reaction is Ca(2+)(in) = Ca(2+)(out). It carries out the reaction K(+)(in) = K(+)(out). The enzyme catalyses Na(+)(in) = Na(+)(out). Fast activation by external ATP. Exhibits slow desensitization during prolonged ATP activation. Not sensitive to the ATP agonist:alpha/beta-methylene-ATP. Functionally, ATP-gated nonselective transmembrane cation channel permeable to potassium, sodium and calcium. Activation by extracellular ATP induces a variety of cellular responses, such as excitatory postsynaptic responses in sensory neurons, neuromuscular junctions (NMJ) formation, hearing, perception of taste and peristalsis. In the inner ear, regulates sound transduction and auditory neurotransmission, outer hair cell electromotility, inner ear gap junctions, and K(+) recycling. Mediates synaptic transmission between neurons and from neurons to smooth muscle. The polypeptide is P2X purinoceptor 2 (P2RX2) (Cavia porcellus (Guinea pig)).